Here is a 450-residue protein sequence, read N- to C-terminus: Magnesium transporter MgtE (450 aa).

Topologically, residues 1-283 are cytoplasmic; that stretch reads MEEKLAVSLQ…SEAGPVALWL (283 aa). Mg(2+)-binding residues include E59, D91, D95, and G136. CBS domains follow at residues 138-200 and 202-258; these read MTPE…RVAE and MNPK…EATE. 5 residues coordinate ATP: Y170, S185, R187, D188, and V207. Mg(2+) is bound by residues E216, A223, D226, D247, D250, E255, E258, and D259. A Ca(2+)-binding site is contributed by E275. E275, Q304, E307, and E311 together coordinate Mn(2+). A helical transmembrane segment spans residues 284–306; sequence ARVRWLVILILTGMVTSSILQGF. Residues 307–315 are Periplasmic-facing; the sequence is ESVLEAVTA. Residue E311 coordinates Ca(2+). The chain crosses the membrane as a helical span at residues 316–337; that stretch reads LAFYVPVLLGTGGNTGNQSATL. At 338–351 the chain is on the cytoplasmic side; sequence IIRALATRDLDLRD. The helical transmembrane segment at 352–381 threads the bilayer; the sequence is WRRVFLKEMGVGLLLGLTLSFLLVGKVYWD. Residues 382-385 are Periplasmic-facing; it reads GHPL. H383 is a binding site for Mn(2+). A helical membrane pass occupies residues 386–409; it reads LLPVVGVSLVLIVFFANLVGAMLP. The Cytoplasmic portion of the chain corresponds to 410–420; sequence FLLRRLGVDPA. D418, A428, and D432 together coordinate Mg(2+). A helical membrane pass occupies residues 421–443; sequence LVSNPLVATLSDVTGLLIYLSVA. Topologically, residues 444 to 450 are periplasmic; that stretch reads RLLLEAV.

This sequence belongs to the SLC41A transporter family. In terms of assembly, homodimer.

It is found in the cell inner membrane. It carries out the reaction Mg(2+)(in) = Mg(2+)(out). With respect to regulation, the channel activity is regulated via the N-terminal cytoplasmic region, which acts as a Mg(2+) sensor to regulate the gating of the ion-conducting pore in response to the intracellular magnesium concentration. Under high-intracellular magnesium conditions, binding of magnesium to the N-terminal cytoplasmic domain stabilizes the closed conformation of the channel. Under low-intracellular magnesium conditions, the channel is in equilibrium between the open and closed states. A cation-binding site within the membrane (M1) strictly recognizes the size and geometry of the Mg(2+) hydration shells, which may be important for the selective transport of Mg(2+) over other cations. Cation-binding sites on the periplasmic side (M2 and M3) regulate channel opening and prevent conduction of near-cognate cations. Binding of Mn(2+) to the periplasmic sites strongly inhibits the Mg(2+) transport activity. In addition, activity is regulated by ATP, which binds to MgtE and modulates its Mg(2+)-dependent channel gating. ATP binding enhances the intracellular domain affinity for Mg(2+) within physiological concentrations of this divalent cation, enabling MgtE to function as an in vivo Mg(2+) sensor. ATP dissociation from MgtE upregulates Mg(2+) influx at both high and low intracellular Mg(2+) concentrations. In terms of biological role, highly selective magnesium channel that plays an important role in Mg(2+) homeostasis. Functions as a Mg(2+)-dependent gating channel. Exhibits low activity with cobalt, suggesting that it might also be involved in the uptake of Co(2+) as a micronutrient. Also exhibits low activity with Ca(2+), but it shows almost no activity with Mn(2+). The sequence is that of Magnesium transporter MgtE from Thermus thermophilus (strain ATCC 27634 / DSM 579 / HB8).